The chain runs to 110 residues: Large ribosomal subunit protein uL22 (110 aa).

It belongs to the universal ribosomal protein uL22 family. Part of the 50S ribosomal subunit.

Its function is as follows. This protein binds specifically to 23S rRNA; its binding is stimulated by other ribosomal proteins, e.g. L4, L17, and L20. It is important during the early stages of 50S assembly. It makes multiple contacts with different domains of the 23S rRNA in the assembled 50S subunit and ribosome. The globular domain of the protein is located near the polypeptide exit tunnel on the outside of the subunit, while an extended beta-hairpin is found that lines the wall of the exit tunnel in the center of the 70S ribosome. This chain is Large ribosomal subunit protein uL22, found in Buchnera aphidicola subsp. Schizaphis graminum (strain Sg).